A 76-amino-acid chain; its full sequence is Acyl carrier protein (76 aa).

The Carrier domain maps to 1 to 76; sequence MSIEERVKKI…SAIDYVQNNQ (76 aa). Ser-36 carries the O-(pantetheine 4'-phosphoryl)serine modification.

It belongs to the acyl carrier protein (ACP) family. 4'-phosphopantetheine is transferred from CoA to a specific serine of apo-ACP by AcpS. This modification is essential for activity because fatty acids are bound in thioester linkage to the sulfhydryl of the prosthetic group.

The protein localises to the cytoplasm. The protein operates within lipid metabolism; fatty acid biosynthesis. Functionally, carrier of the growing fatty acid chain in fatty acid biosynthesis. This Actinobacillus succinogenes (strain ATCC 55618 / DSM 22257 / CCUG 43843 / 130Z) protein is Acyl carrier protein.